The sequence spans 88 residues: Small ribosomal subunit protein uS17 (88 aa).

The protein belongs to the universal ribosomal protein uS17 family. In terms of assembly, part of the 30S ribosomal subunit.

One of the primary rRNA binding proteins, it binds specifically to the 5'-end of 16S ribosomal RNA. This Hahella chejuensis (strain KCTC 2396) protein is Small ribosomal subunit protein uS17.